We begin with the raw amino-acid sequence, 953 residues long: MKISELSPEYRQPPPHAGLIADLSKAVSDVESFAASATAPEKLAADLRRILTSLASAASSSSFTESLSVQIWRLGTRLWNAVVDRANSAALAGGPAALAVEAEIRQAAPELLLLAGIPNGVPSAAAKVASFFHRSGLAWLDLGRVDLASACFEKATPLVSAAATEDRGVLLELNLARARAASDAGDQALAVALLSRSKPLAAASPEGAKSLAQGYLSIGEATLAAKHSNPAVEASTLFTEALDLCEKAASPSSSSPRTPPYGGATPKTPNLEGLKRRCLRFLALERLQAQDYEGVLRCIRVSRASMGLEEEHPSIGVMAMRAWIGSGNMAEADKELERLMANALATENLCVSAAEAYLAAAGPEAARKVLIALAARCRAGGAAAAVRVVKQVIDGGGGGIGRARAIAELVSDERVVALFDGPGNTHERGTMHALLWNCGTEHFRAKNYDTSADLIERSMLYVSRDEESRSRRADCFRVLSICHIALQHLDRALEFVNEAYKVEPNIKCAFLKVKINLQKGEEDEAFKQMKTMVGCVDFNPEFLTLTAHEAMSCKSFGVAVASLSYLLGLYSAERPMPMPEVAVLRNLIELLSREPGTEAEILKYSRRAKQRMADLGVESFFGSGIVGGRELNWFADLSWNMGLRASKEKKYNFGSEFFELAAEFFSSRNAECDENRSKVCKALIMAVTIMLNAEELNNSPLSDSDIKKGVEMLSRAGKLLPLISPSVPVASDQLEANNFLYLHTFNSYQLMGRMGTPAHPQQLQLIKNFASSKACTPANLLTLGVTASKGALPNMLAAEFSLKACITTALASQSPNYRVISCALRKLACLAGLQDLNGSKSDAAYDVFQQAYQIVVGLKEGEYPVEEGQWLVATAWNMSCLPLRLHQAKVARKWMKMGLDLARHLEGMKERIASMQTTFENLERVSGDEPDECSQEEAPKASISGSMSQPVLV.

The TPR 1 repeat unit spans residues 129–162 (ASFFHRSGLAWLDLGRVDLASACFEKATPLVSAA). Residues 248–269 (AASPSSSSPRTPPYGGATPKTP) are disordered. TPR repeat units follow at residues 432-465 (HALLWNCGTEHFRAKNYDTSADLIERSMLYVSRD) and 473-506 (ADCFRVLSICHIALQHLDRALEFVNEAYKVEPNI). The disordered stretch occupies residues 924–953 (RVSGDEPDECSQEEAPKASISGSMSQPVLV). The segment covering 943 to 953 (ISGSMSQPVLV) has biased composition (polar residues).

It is found in the nucleus. The protein resides in the chromosome. Required for crossover formation, complete synapsis of homologous chromosomes and bivalent formation during meiosis. Is specific to recombination events resulting in interference-sensitive crossovers (class I meiotic crossover) and works cooperatively with MER3 to promote crossovers. The chain is TPR repeat-containing protein ZIP4 from Oryza sativa subsp. indica (Rice).